Here is a 151-residue protein sequence, read N- to C-terminus: Small ribosomal subunit protein uS13m (151 aa).

This sequence belongs to the universal ribosomal protein uS13 family. Component of the mitochondrial small ribosomal subunit (mt-SSU). Mature yeast 74S mitochondrial ribosomes consist of a small (37S) and a large (54S) subunit. The 37S small subunit contains a 15S ribosomal RNA (15S mt-rRNA) and at least 32 different proteins. The 54S large subunit contains a 21S rRNA (21S mt-rRNA) and at least 45 different proteins.

Its subcellular location is the mitochondrion. Functionally, component of the mitochondrial ribosome (mitoribosome), a dedicated translation machinery responsible for the synthesis of mitochondrial genome-encoded proteins, including at least some of the essential transmembrane subunits of the mitochondrial respiratory chain. The mitoribosomes are attached to the mitochondrial inner membrane and translation products are cotranslationally integrated into the membrane. The polypeptide is Small ribosomal subunit protein uS13m (sws2) (Schizosaccharomyces pombe (strain 972 / ATCC 24843) (Fission yeast)).